Here is an 825-residue protein sequence, read N- to C-terminus: Phenylalanine--tRNA ligase beta subunit (825 aa).

Residues 39–154 (RTWADGVVLG…EAHPLGSDVR (116 aa)) enclose the tRNA-binding domain. The B5 domain occupies 411–506 (PLERTLKLRL…RLYGYDRFSE (96 aa)). Mg(2+) contacts are provided by D484, D490, E493, and E494. Residues 731-824 (SPFPAADRDI…LATQFPVTLR (94 aa)) form the FDX-ACB domain.

Belongs to the phenylalanyl-tRNA synthetase beta subunit family. Type 1 subfamily. In terms of assembly, tetramer of two alpha and two beta subunits. It depends on Mg(2+) as a cofactor.

The protein localises to the cytoplasm. The enzyme catalyses tRNA(Phe) + L-phenylalanine + ATP = L-phenylalanyl-tRNA(Phe) + AMP + diphosphate + H(+). In Synechococcus sp. (strain JA-2-3B'a(2-13)) (Cyanobacteria bacterium Yellowstone B-Prime), this protein is Phenylalanine--tRNA ligase beta subunit.